The primary structure comprises 525 residues: Estrogen receptor (525 aa).

The tract at residues 1-59 is disordered; it reads PTSPLVFVPSSPRLSPFMHPPSHHYLETTSTPVYRSSVSSSQQQLSREDQCGTSDDSYS. The tract at residues 1-82 is modulating; the sequence is PTSPLVFVPS…GFEMAKEMRF (82 aa). Low complexity predominate over residues 36-45; that stretch reads SSVSSSQQQL. 2 consecutive NR C4-type zinc fingers follow at residues 83–103 and 119–143; these read CAVCSDYASGYDYGVWSCEGC and CPATNQCTIDRNRRKSCQACRLRKC. The segment at residues 83–148 is a DNA-binding region (nuclear receptor); that stretch reads CAVCSDYASG…RLRKCYQVGM (66 aa). The hinge stretch occupies residues 149–209; the sequence is MKGGVRKDRG…GGGKSSIIGM (61 aa). Positions 154-182 are enriched in basic and acidic residues; sequence RKDRGRVLRRDKRRTGTSDKASKDLEHRT. The segment at 154–203 is disordered; that stretch reads RKDRGRVLRRDKRRTGTSDKASKDLEHRTAPPQDRRKHSSSSSSAGGGGK. The NR LBD domain occupies 210-446; that stretch reads SPDQVLLLLQ…DLLLEMLDAH (237 aa). Positions 452 to 465 are enriched in basic and acidic residues; sequence DRPAESWSQADREP. The disordered stretch occupies residues 452 to 525; sequence DRPAESWSQA…GPRSDCTHIL (74 aa). Gly residues predominate over residues 479–493; sequence SGGGDGGPSSAGSGS.

Belongs to the nuclear hormone receptor family. NR3 subfamily. Binds DNA as a homodimer. Can form a heterodimer with ER-beta. As to expression, abundant in the liver, less abundant in the testes and barely detectable in the ovary and brain.

The protein localises to the nucleus. The steroid hormones and their receptors are involved in the regulation of eukaryotic gene expression and affect cellular proliferation and differentiation in target tissues. In Micropogonias undulatus (Atlantic croaker), this protein is Estrogen receptor (esr1).